Here is a 292-residue protein sequence, read N- to C-terminus: Shikimate dehydrogenase (NADP(+)) (292 aa).

Shikimate-binding positions include 25 to 27 and threonine 72; that span reads SKS. Lysine 76 functions as the Proton acceptor in the catalytic mechanism. 2 residues coordinate shikimate: asparagine 97 and aspartate 113. NADP(+)-binding positions include 137 to 141, 161 to 166, and methionine 230; these read GAGGA and NRTQSK. Tyrosine 232 is a shikimate binding site. Glycine 254 is an NADP(+) binding site.

Belongs to the shikimate dehydrogenase family. As to quaternary structure, homodimer.

The catalysed reaction is shikimate + NADP(+) = 3-dehydroshikimate + NADPH + H(+). It functions in the pathway metabolic intermediate biosynthesis; chorismate biosynthesis; chorismate from D-erythrose 4-phosphate and phosphoenolpyruvate: step 4/7. Functionally, involved in the biosynthesis of the chorismate, which leads to the biosynthesis of aromatic amino acids. Catalyzes the reversible NADPH linked reduction of 3-dehydroshikimate (DHSA) to yield shikimate (SA). This is Shikimate dehydrogenase (NADP(+)) from Shewanella sp. (strain MR-4).